Reading from the N-terminus, the 408-residue chain is MDLRSRTDDALDMELHAGFDAPEIARAVLTEKTLTGLISSISPLVNRLRDSILIFSDEGLIIHCSLETEQLYIPIPANMFDQYNWTGPRMVVLAATEGRSSLIDAFRHTKDPSTPTRLYFKFTGQPPERSIIQTMVWQRPGDCGPDDQVQCYKQVVKRELACYTMMFPNLTPDISICLKRDQFTRLQRLLKTFGFTTCFILTATDMYIQTAGGGFISFNVSLDINGSKPTPYNLIRSITNSKRILNNVVYGSGSMREFGVLLETHSGFRSAVQNLKLTRDETCYINFYLALTNSPMVGLYIQRSAPVHSFFYATFLSPKDLKEKLTSMQLFANTESVKDEPPLKKRRNLLTKRNEKNTGNKMGGKLPETTWQEGIGIREYCVAPPVDPAGTLDYSELSRESDVICTVK.

The Nuclear localization signal motif lies at 344 to 353 (KKRRNLLTKR).

This sequence belongs to the herpesviridae DNA polymerase processivity factor family. In terms of assembly, interacts with the DNA polymerase catalytic subunit. Interacts with the origin-binding protein.

The protein localises to the host nucleus. In terms of biological role, plays an essential role in viral DNA replication by acting as the polymerase accessory subunit. Associates with the viral polymerase to increase its processivity and forms high-affinity direct interactions with DNA. Facilitates the origin-binding protein loading onto DNA thus increasing its ability to assemble into a functional complex capable of unwinding duplex DNA. This chain is DNA polymerase processivity factor, found in Varicella-zoster virus (strain Oka vaccine) (HHV-3).